The chain runs to 341 residues: S-adenosylmethionine:tRNA ribosyltransferase-isomerase (341 aa).

This sequence belongs to the QueA family. As to quaternary structure, monomer.

The protein localises to the cytoplasm. It carries out the reaction 7-aminomethyl-7-carbaguanosine(34) in tRNA + S-adenosyl-L-methionine = epoxyqueuosine(34) in tRNA + adenine + L-methionine + 2 H(+). The protein operates within tRNA modification; tRNA-queuosine biosynthesis. Functionally, transfers and isomerizes the ribose moiety from AdoMet to the 7-aminomethyl group of 7-deazaguanine (preQ1-tRNA) to give epoxyqueuosine (oQ-tRNA). The chain is S-adenosylmethionine:tRNA ribosyltransferase-isomerase from Caldanaerobacter subterraneus subsp. tengcongensis (strain DSM 15242 / JCM 11007 / NBRC 100824 / MB4) (Thermoanaerobacter tengcongensis).